The primary structure comprises 193 residues: dCTP deaminase (193 aa).

Residues 110-115 (RSSLAR), aspartate 128, 136-138 (VLE), tyrosine 171, lysine 178, and glutamine 182 each bind dCTP. Catalysis depends on glutamate 138, which acts as the Proton donor/acceptor. Residues 170–193 (PYNSRQDAKYRGQQGAVASRIDKD) are disordered.

The protein belongs to the dCTP deaminase family. As to quaternary structure, homotrimer.

It carries out the reaction dCTP + H2O + H(+) = dUTP + NH4(+). It participates in pyrimidine metabolism; dUMP biosynthesis; dUMP from dCTP (dUTP route): step 1/2. Functionally, catalyzes the deamination of dCTP to dUTP. The sequence is that of dCTP deaminase from Yersinia enterocolitica serotype O:8 / biotype 1B (strain NCTC 13174 / 8081).